The chain runs to 354 residues: Alkanal monooxygenase alpha chain (354 aa).

This sequence belongs to the bacterial luciferase oxidoreductase family. In terms of assembly, heterodimer of an alpha and a beta chain.

The enzyme catalyses a long-chain fatty aldehyde + FMNH2 + O2 = a long-chain fatty acid + hnu + FMN + H2O + 2 H(+). Light-emitting reaction in luminous bacteria. The polypeptide is Alkanal monooxygenase alpha chain (luxA) (Photobacterium leiognathi).